The chain runs to 416 residues: Serine hydroxymethyltransferase (416 aa).

(6S)-5,6,7,8-tetrahydrofolate is bound by residues L121 and 125 to 127; that span reads GHL. At K229 the chain carries N6-(pyridoxal phosphate)lysine.

It belongs to the SHMT family. In terms of assembly, homodimer. Requires pyridoxal 5'-phosphate as cofactor.

It localises to the cytoplasm. The enzyme catalyses (6R)-5,10-methylene-5,6,7,8-tetrahydrofolate + glycine + H2O = (6S)-5,6,7,8-tetrahydrofolate + L-serine. Its pathway is one-carbon metabolism; tetrahydrofolate interconversion. It functions in the pathway amino-acid biosynthesis; glycine biosynthesis; glycine from L-serine: step 1/1. In terms of biological role, catalyzes the reversible interconversion of serine and glycine with tetrahydrofolate (THF) serving as the one-carbon carrier. This reaction serves as the major source of one-carbon groups required for the biosynthesis of purines, thymidylate, methionine, and other important biomolecules. Also exhibits THF-independent aldolase activity toward beta-hydroxyamino acids, producing glycine and aldehydes, via a retro-aldol mechanism. In Neisseria gonorrhoeae (strain ATCC 700825 / FA 1090), this protein is Serine hydroxymethyltransferase.